The chain runs to 1016 residues: S-layer protein A (1016 aa).

An N-terminal signal peptide occupies residues 1–30 (MDLSTKKVISAGLVFIYALSLAMLVPMFLA).

Belongs to the Sulfolobales SlaA family. In terms of assembly, the mushroom-shaped unit cells of the Sulfolobales' S-layers may consist of three SlaB subunits and six SlaA subunits.

It is found in the secreted. The protein localises to the cell wall. Its subcellular location is the S-layer. Its function is as follows. S-layer large protein. May form the highly ordered outer sheath. This chain is S-layer protein A, found in Acidianus ambivalens (Desulfurolobus ambivalens).